An 863-amino-acid polypeptide reads, in one-letter code: DNA mismatch repair protein MutS (863 aa).

615–622 is an ATP binding site; that stretch reads GPNMAGKS.

This sequence belongs to the DNA mismatch repair MutS family.

This protein is involved in the repair of mismatches in DNA. It is possible that it carries out the mismatch recognition step. This protein has a weak ATPase activity. The chain is DNA mismatch repair protein MutS from Pelotomaculum thermopropionicum (strain DSM 13744 / JCM 10971 / SI).